Here is a 144-residue protein sequence, read N- to C-terminus: 3-dehydroquinate dehydratase (144 aa).

The active-site Proton acceptor is the Tyr-24. The substrate site is built by Asn-76, His-82, and Asp-89. His-102 serves as the catalytic Proton donor. Residues 103 to 104 (LS) and Arg-113 each bind substrate.

It belongs to the type-II 3-dehydroquinase family. Homododecamer.

It catalyses the reaction 3-dehydroquinate = 3-dehydroshikimate + H2O. Its pathway is metabolic intermediate biosynthesis; chorismate biosynthesis; chorismate from D-erythrose 4-phosphate and phosphoenolpyruvate: step 3/7. Functionally, catalyzes a trans-dehydration via an enolate intermediate. This chain is 3-dehydroquinate dehydratase, found in Bordetella petrii (strain ATCC BAA-461 / DSM 12804 / CCUG 43448).